Consider the following 350-residue polypeptide: Dihydroorotate dehydrogenase (quinone) (350 aa).

Residues 67–71 (AGFDK) and G91 contribute to the FMN site. K71 serves as a coordination point for substrate. 116–120 (NRMGL) is a binding site for substrate. FMN-binding residues include N144 and N177. N177 contacts substrate. The Nucleophile role is filled by C180. N182 provides a ligand contact to substrate. FMN contacts are provided by K213 and T241. 242–243 (NT) contacts substrate. The segment at 245–265 (TERPASLRSPNAVETGGLSGK) is disordered. Residues G264, G291, and 312-313 (YT) each bind FMN.

It belongs to the dihydroorotate dehydrogenase family. Type 2 subfamily. In terms of assembly, monomer. Requires FMN as cofactor.

The protein localises to the cell membrane. It catalyses the reaction (S)-dihydroorotate + a quinone = orotate + a quinol. It functions in the pathway pyrimidine metabolism; UMP biosynthesis via de novo pathway; orotate from (S)-dihydroorotate (quinone route): step 1/1. Catalyzes the conversion of dihydroorotate to orotate with quinone as electron acceptor. The chain is Dihydroorotate dehydrogenase (quinone) (pyrD) from Haloarcula marismortui (strain ATCC 43049 / DSM 3752 / JCM 8966 / VKM B-1809) (Halobacterium marismortui).